The primary structure comprises 630 residues: Prolactin receptor (630 aa).

The N-terminal stretch at 1-23 (MMTKVGEVLLLLLLPAFVPHTDG) is a signal peptide. Topologically, residues 24-234 (THYSLPGKPT…VKVPEYLHRE (211 aa)) are extracellular. 2 consecutive Fibronectin type-III domains span residues 31-128 (KPTE…IVQP) and 130-230 (PPEK…VPEY). Cystine bridges form between C37/C47 and C76/C87. Residues N92 and N101 are each glycosylated (N-linked (GlcNAc...) asparagine). Zn(2+) contacts are provided by D212 and H213. The short motif at 216–220 (WSEWS) is the WSXWS motif element. A helical transmembrane segment spans residues 235–258 (KSVWILVLVFSAFILLLLTWLIHM). Residues 259-630 (NSHSLKHCML…DTATVFSVHT (372 aa)) are Cytoplasmic-facing. Residues 267-275 (MLPPVPGPK) carry the Box 1 motif motif. The segment at 339-389 (KSIGSASDSDSGRGSCDSDNLLMDKSGAPKEEQQQQNQEGDQIGKETQGPK) is disordered. Residues 340–357 (SIGSASDSDSGRGSCDSD) show a composition bias toward low complexity. The segment covering 380 to 389 (QIGKETQGPK) has biased composition (basic and acidic residues).

The protein belongs to the type I cytokine receptor family. Type 1 subfamily.

The protein localises to the membrane. In terms of biological role, this is a receptor for the anterior pituitary hormone prolactin. The polypeptide is Prolactin receptor (prlr) (Oreochromis niloticus (Nile tilapia)).